The following is a 185-amino-acid chain: Threonylcarbamoyl-AMP synthase (185 aa).

The region spanning 4 to 185 (SWRVQQAAQD…IATAQIVRAG (182 aa)) is the YrdC-like domain.

It belongs to the SUA5 family. TsaC subfamily.

It localises to the cytoplasm. The enzyme catalyses L-threonine + hydrogencarbonate + ATP = L-threonylcarbamoyladenylate + diphosphate + H2O. Required for the formation of a threonylcarbamoyl group on adenosine at position 37 (t(6)A37) in tRNAs that read codons beginning with adenine. Catalyzes the conversion of L-threonine, HCO(3)(-)/CO(2) and ATP to give threonylcarbamoyl-AMP (TC-AMP) as the acyladenylate intermediate, with the release of diphosphate. The chain is Threonylcarbamoyl-AMP synthase from Pseudomonas syringae pv. syringae (strain B728a).